The following is a 149-amino-acid chain: Transcriptional regulator MraZ (149 aa).

SpoVT-AbrB domains lie at 7-54 (KYVN…GISH) and 83-126 (AVQL…QPQN).

This sequence belongs to the MraZ family. As to quaternary structure, forms oligomers.

It localises to the cytoplasm. It is found in the nucleoid. In Rickettsia felis (strain ATCC VR-1525 / URRWXCal2) (Rickettsia azadi), this protein is Transcriptional regulator MraZ.